A 1894-amino-acid chain; its full sequence is Plexin-A1 (1894 aa).

An N-terminal signal peptide occupies residues 1 to 27; sequence MPLPPLSSRTLLLLLLLLLRGVWIAIS. The region spanning 28–510 is the Sema domain; the sequence is SPPAGLGPQP…TEKQVTQVPV (483 aa). At 28-1242 the chain is on the extracellular side; sequence SPPAGLGPQP…VYSDSLLTLP (1215 aa). A glycan (N-linked (GlcNAc...) asparagine) is linked at Asn-75. Intrachain disulfides connect Cys-93/Cys-102, Cys-128/Cys-136, Cys-284/Cys-405, Cys-300/Cys-356, Cys-374/Cys-393, Cys-513/Cys-530, Cys-519/Cys-561, Cys-522/Cys-539, Cys-533/Cys-545, and Cys-596/Cys-615. N-linked (GlcNAc...) asparagine glycans are attached at residues Asn-658, Asn-670, and Asn-699. 4 consecutive IPT/TIG domains span residues 862 to 957, 959 to 1043, 1046 to 1145, and 1148 to 1234; these read PKIL…FTFV, PTFY…YNYT, PTIL…FLYY, and PVLE…LQVY. Asn-1041 is a glycosylation site (N-linked (GlcNAc...) asparagine). Asn-1185 and Asn-1210 each carry an N-linked (GlcNAc...) asparagine glycan. Residues 1243–1263 form a helical membrane-spanning segment; sequence AIVGIGGGGGLLLLVIVAVLI. Residues 1262-1315 adopt a coiled-coil conformation; it reads LIAYKRKSRDADRTLKRLQLQMDNLESRVALECKEAFAELQTDIHELTSDLDGA. Topologically, residues 1264–1894 are cytoplasmic; that stretch reads AYKRKSRDAD…QVVDTMALSS (631 aa).

This sequence belongs to the plexin family. In terms of assembly, interacts directly with NRP1 and NRP2. Interacts with PLXN1B. Interacts with FARP2, RND1 and KDR/VEGFR2. Binding of SEMA3A leads to dissociation of FARP2. Interacts with CRMP1, DPYSL2/CRMP2, DPYSL3/CRMP3 and DPYSL4/CRMP4. Interacts (via TIG domains) with TREM2; the interaction mediates SEMA6D binding and signaling through TYROBP. Ubiquitous.

It is found in the cell membrane. Coreceptor for SEMA3A, SEMA3C, SEMA3F and SEMA6D. Necessary for signaling by class 3 semaphorins and subsequent remodeling of the cytoskeleton. Plays a role in axon guidance, invasive growth and cell migration. Class 3 semaphorins bind to a complex composed of a neuropilin and a plexin. The plexin modulates the affinity of the complex for specific semaphorins, and its cytoplasmic domain is required for the activation of down-stream signaling events in the cytoplasm. Acts as coreceptor of TREM2 for SEMA6D in dendritic cells and is involved in the generation of immune responses and skeletal homeostasis. The chain is Plexin-A1 (Plxna1) from Mus musculus (Mouse).